Consider the following 220-residue polypeptide: Antistasin (220 aa).

Residues 1–19 (MNYLFVFLALSAAVTFANA) form the signal peptide. 6 Antistasin-like domains span residues 21–46 (CNKI…ICKC), 54–79 (CSNR…ICRC), 91–117 (CDGL…KCEC), 120–145 (CKQF…TCKC), 154–180 (CDDL…KCEC), and 183–208 (CKNF…TCKC).

It belongs to the protease inhibitor I15 (antistasin) family. As to expression, gland cells. It is more strongly expressed in the head than in the gastric tissue.

It localises to the secreted. This highly disulfide-bonded protein is a potent inhibitor of factor Xa. Facilitates digestion of tissues and may also protect the gastric tissues from its own digestive enzymes. May have therapeutic utility as an anticoagulant. Also exhibits a strong metastatic activity. The protein is Antistasin of Hydra vulgaris (Hydra).